A 929-amino-acid chain; its full sequence is Bifunctional glutamine synthetase adenylyltransferase/adenylyl-removing enzyme (929 aa).

An adenylyl removase region spans residues 1–422; that stretch reads MTTPISTSRA…TRHFEQIFAV (422 aa). Residues 429–929 form an adenylyl transferase region; that stretch reads LGTFARIRPE…FQLWEDVFGT (501 aa).

Belongs to the GlnE family. Requires Mg(2+) as cofactor.

The enzyme catalyses [glutamine synthetase]-O(4)-(5'-adenylyl)-L-tyrosine + phosphate = [glutamine synthetase]-L-tyrosine + ADP. It carries out the reaction [glutamine synthetase]-L-tyrosine + ATP = [glutamine synthetase]-O(4)-(5'-adenylyl)-L-tyrosine + diphosphate. Its function is as follows. Involved in the regulation of glutamine synthetase GlnA, a key enzyme in the process to assimilate ammonia. When cellular nitrogen levels are high, the C-terminal adenylyl transferase (AT) inactivates GlnA by covalent transfer of an adenylyl group from ATP to specific tyrosine residue of GlnA, thus reducing its activity. Conversely, when nitrogen levels are low, the N-terminal adenylyl removase (AR) activates GlnA by removing the adenylyl group by phosphorolysis, increasing its activity. The regulatory region of GlnE binds the signal transduction protein PII (GlnB) which indicates the nitrogen status of the cell. This Nitrosomonas eutropha (strain DSM 101675 / C91 / Nm57) protein is Bifunctional glutamine synthetase adenylyltransferase/adenylyl-removing enzyme.